A 310-amino-acid polypeptide reads, in one-letter code: ADP-L-glycero-D-manno-heptose-6-epimerase (310 aa).

Residues 10–11 (FI), 31–32 (DN), Lys38, Lys53, 75–79 (EGACS), and Asn92 contribute to the NADP(+) site. Tyr140 (proton acceptor) is an active-site residue. Position 144 (Lys144) interacts with NADP(+). Residue Asn169 participates in substrate binding. Val170 and Lys178 together coordinate NADP(+). Lys178 functions as the Proton acceptor in the catalytic mechanism. Substrate-binding positions include Ser180, His187, 201–204 (FEGS), Arg209, and Tyr272.

Belongs to the NAD(P)-dependent epimerase/dehydratase family. HldD subfamily. As to quaternary structure, homopentamer. NADP(+) is required as a cofactor.

The enzyme catalyses ADP-D-glycero-beta-D-manno-heptose = ADP-L-glycero-beta-D-manno-heptose. It participates in nucleotide-sugar biosynthesis; ADP-L-glycero-beta-D-manno-heptose biosynthesis; ADP-L-glycero-beta-D-manno-heptose from D-glycero-beta-D-manno-heptose 7-phosphate: step 4/4. Catalyzes the interconversion between ADP-D-glycero-beta-D-manno-heptose and ADP-L-glycero-beta-D-manno-heptose via an epimerization at carbon 6 of the heptose. The polypeptide is ADP-L-glycero-D-manno-heptose-6-epimerase (Salmonella newport (strain SL254)).